The chain runs to 341 residues: Tryptophan--tRNA ligase (341 aa).

Residues 11 to 13 (RPT) and 19 to 20 (GH) each bind ATP. The 'HIGH' region signature appears at 12 to 20 (PTGKLHIGH). L-tryptophan is bound at residue aspartate 140. ATP is bound by residues 152–154 (GTD), leucine 194, and 202–206 (KMSKS). A 'KMSKS' region motif is present at residues 202-206 (KMSKS).

Belongs to the class-I aminoacyl-tRNA synthetase family. In terms of assembly, homodimer.

The protein resides in the cytoplasm. The catalysed reaction is tRNA(Trp) + L-tryptophan + ATP = L-tryptophyl-tRNA(Trp) + AMP + diphosphate + H(+). In terms of biological role, catalyzes the attachment of tryptophan to tRNA(Trp). In Streptococcus agalactiae serotype III (strain NEM316), this protein is Tryptophan--tRNA ligase.